The primary structure comprises 318 residues: L-malyl-CoA/beta-methylmalyl-CoA lyase (318 aa).

The substrate site is built by Phe19, Arg24, Lys30, and Arg76. The Mg(2+) site is built by Glu141 and Asp168. Substrate is bound by residues 167–168 (AD) and 251–252 (IH).

The protein belongs to the HpcH/HpaI aldolase family. As to quaternary structure, homohexamer. Dimer of trimers. Requires Mg(2+) as cofactor. It depends on Mn(2+) as a cofactor.

It carries out the reaction (S)-malyl-CoA = glyoxylate + acetyl-CoA. The catalysed reaction is (2R,3S)-beta-methylmalyl-CoA = propanoyl-CoA + glyoxylate. Its activity is regulated as follows. In vitro inhibited by EDTA. Functionally, involved in the ethylmalonyl-CoA pathway for acetate assimilation. Catalyzes the reversible condensation of glyoxylate and acetyl-CoA to L-malyl-CoA and the reversible condensation of glyoxylate and propionyl-CoA to beta-methylmalyl-CoA. The chain is L-malyl-CoA/beta-methylmalyl-CoA lyase from Rhodobacter capsulatus (Rhodopseudomonas capsulata).